Consider the following 109-residue polypeptide: Serine protease inhibitor (109 aa).

The first 28 residues, 1-28 (MKMKLLQVHFVLLVSSSFLLGYTGMVTA), serve as a signal peptide directing secretion. 5 disulfide bridges follow: C43-C83, C52-C79, C58-C73, C62-C104, and C85-C98. The region spanning 43–104 (CRENEIFSQC…QGVCILENSC (62 aa)) is the TIL domain.

Belongs to the serine protease inhibitor-like (TIL domain-containing) family. Ubiquitously expressed (at protein level), including in venom glands. Found more precisely in the epidermis, fat body, gut, muscle, and venom of worker bees.

The protein resides in the secreted. In terms of biological role, dual role peptide that functions as a broad-spectrum antimicrobial peptide and antifibrinolytic toxin. Inhibits trypsin (IC(50)=375 nM), plasmin (IC(50)=2140 nM), and microbial serine proteases (subtilisin A (IC(50)=294 nM) and proteinase K (IC(50)=459 nM)). Exhibits antifibrinolytic activity by binding and inhibiting plasmin. Does not inhibit chymotrypsin, elastase or thrombin. Binds to microbial cell wall carbohydrates (LPS, mannan and N-acetyl-D-glucosamine) and shows antimicrobial activity (MIC=4.1 uM against B.thuringiensis, MIC=4.95 uM against E.coli, MIC=9.6 uM against the fungus B.bassiana). Does not show hemolytic activity. The polypeptide is Serine protease inhibitor (Bombus ignitus (Bumblebee)).